The following is a 366-amino-acid chain: Anhydro-N-acetylmuramic acid kinase (366 aa).

Position 10–17 (10–17 (GTSMDGID)) interacts with ATP.

This sequence belongs to the anhydro-N-acetylmuramic acid kinase family.

The catalysed reaction is 1,6-anhydro-N-acetyl-beta-muramate + ATP + H2O = N-acetyl-D-muramate 6-phosphate + ADP + H(+). Its pathway is amino-sugar metabolism; 1,6-anhydro-N-acetylmuramate degradation. It functions in the pathway cell wall biogenesis; peptidoglycan recycling. Catalyzes the specific phosphorylation of 1,6-anhydro-N-acetylmuramic acid (anhMurNAc) with the simultaneous cleavage of the 1,6-anhydro ring, generating MurNAc-6-P. Is required for the utilization of anhMurNAc either imported from the medium or derived from its own cell wall murein, and thus plays a role in cell wall recycling. This chain is Anhydro-N-acetylmuramic acid kinase, found in Legionella pneumophila subsp. pneumophila (strain Philadelphia 1 / ATCC 33152 / DSM 7513).